The chain runs to 335 residues: Cell division protein ZipA (335 aa).

Over Met1–Asn4 the chain is Periplasmic. Residues Ala5 to Ser25 traverse the membrane as a helical segment. Residues Asn26 to Ser335 lie on the Cytoplasmic side of the membrane.

This sequence belongs to the ZipA family. Interacts with FtsZ via their C-terminal domains.

The protein localises to the cell inner membrane. Functionally, essential cell division protein that stabilizes the FtsZ protofilaments by cross-linking them and that serves as a cytoplasmic membrane anchor for the Z ring. Also required for the recruitment to the septal ring of downstream cell division proteins. The sequence is that of Cell division protein ZipA from Histophilus somni (strain 129Pt) (Haemophilus somnus).